The sequence spans 916 residues: Protein translocase subunit SecA (916 aa).

Residues glutamine 87, 105 to 109, and aspartate 512 each bind ATP; that span reads GEGKT. A disordered region spans residues 857-916; sequence QHAEAPSMEQAVAGEDEELPEGPAPVVPLEPVRNEQKIGRNEPCPCGSGKKYKHCHGQLD. Zn(2+) contacts are provided by cysteine 900, cysteine 902, cysteine 911, and histidine 912. Over residues 906–916 the composition is skewed to basic residues; it reads KKYKHCHGQLD.

It belongs to the SecA family. As to quaternary structure, monomer and homodimer. Part of the essential Sec protein translocation apparatus which comprises SecA, SecYEG and auxiliary proteins SecDF-YajC and YidC. It depends on Zn(2+) as a cofactor.

Its subcellular location is the cell inner membrane. It is found in the cytoplasm. It catalyses the reaction ATP + H2O + cellular proteinSide 1 = ADP + phosphate + cellular proteinSide 2.. In terms of biological role, part of the Sec protein translocase complex. Interacts with the SecYEG preprotein conducting channel. Has a central role in coupling the hydrolysis of ATP to the transfer of proteins into and across the cell membrane, serving both as a receptor for the preprotein-SecB complex and as an ATP-driven molecular motor driving the stepwise translocation of polypeptide chains across the membrane. The sequence is that of Protein translocase subunit SecA from Pseudomonas paraeruginosa (strain DSM 24068 / PA7) (Pseudomonas aeruginosa (strain PA7)).